Here is a 285-residue protein sequence, read N- to C-terminus: MTALLIDGNALSKTLRTQAAQRAAALTARGHQPGLAVVLVGANPASEVYVRNKIKACEDNGFFSHKDAYPDTLSEADLLARIDELNRDPKIHGILVQLPLPAHIDSHKVLEAIAPEKDVDGFHVANAGALMTGKPLFRPCTPYGVMKMFEAHDIPLQGANAVVIGRSNIVGKPMAMMLLEAGATVTICHSKTRDLAAHTRQADIVVAAVGKRNILTADMVKPGATVIDVGMNRDDAGKLCGDVDFAGVKEVAGHITPVPGGVGPMTITMLLINTIEAAERAAAAA.

NADP(+) is bound by residues 165-167 and serine 190; that span reads GRS.

Belongs to the tetrahydrofolate dehydrogenase/cyclohydrolase family. Homodimer.

It catalyses the reaction (6R)-5,10-methylene-5,6,7,8-tetrahydrofolate + NADP(+) = (6R)-5,10-methenyltetrahydrofolate + NADPH. It carries out the reaction (6R)-5,10-methenyltetrahydrofolate + H2O = (6R)-10-formyltetrahydrofolate + H(+). It participates in one-carbon metabolism; tetrahydrofolate interconversion. Catalyzes the oxidation of 5,10-methylenetetrahydrofolate to 5,10-methenyltetrahydrofolate and then the hydrolysis of 5,10-methenyltetrahydrofolate to 10-formyltetrahydrofolate. The chain is Bifunctional protein FolD from Burkholderia ambifaria (strain ATCC BAA-244 / DSM 16087 / CCUG 44356 / LMG 19182 / AMMD) (Burkholderia cepacia (strain AMMD)).